The sequence spans 518 residues: Protein MGF 505-6R (518 aa).

ANK repeat units follow at residues 54–83, 129–158, 261–290, 292–322, and 324–351; these read SIND…NLHY, ECDF…LLNV, SVNR…IPRG, IERL…KVKN, and KKLV…NLVD.

This sequence belongs to the asfivirus MGF 505 family.

Plays a role in virus cell tropism, and may be required for efficient virus replication in macrophages. The polypeptide is Protein MGF 505-6R (Ornithodoros (relapsing fever ticks)).